We begin with the raw amino-acid sequence, 704 residues long: MTTTNRNNLKLTALTAAVLTLSACGGSDAVAENKNVKPAYLGEVASASYDGISDDLLTAGLGKTGLGGAAPAVVDPLSPTSAELRKLAIFNNYRAILDITAGGGYGTLYGPNVDAKGVVGASEGMIAGTEYIAYSDDGTGRQNITMMVQVPATFNPASPCIVTATSSGSRGVYGAIGSSGEWGLKNGCAVAYTDKGTGTGIHDLQNDTVNVQNGGRASATAAGKASIFTALLTSIERAAFNLATPNRFAIKHAHSQQNPEKDWGKWTLQSVEFAYFVLNQKYGDLASDGVAHLKKLTPANTIVIASSVSNGAGAALAAAEQDTQGLISGVAVAEPEVQLAPDARLSIVRGTTTLVGTGKQLLDYFTLANLLQPCAALVSPSTNVFNTVNAAIAGNRCSALKANGLITGTTTAEQAASAMAALVAAGWQPESSDLQASHYSFATLPVALTYANTYGRFGVADNLCGFSYAATGAATSATPLAPVPASAAVLATSFGTSNGVPPTAGINIVNNNSVGGPLLDAASLSVGGVQDYNIAGALCLRGLVTGTSANAVRVQQGMSEVLRSANLHGKPALIVQGRSDTLLPVAFTGRPYFGMNKIVEGANSRLSYIEVTNAQHFDAFLGFPGYANRLVPLHRYFIQAMDMMYANLKTGAALPTSQVVRTVPRGLAGTAANPITAANVPPIKAVADVADQITFANNVVTVAD.

The N-terminal stretch at Met1–Ala31 is a signal peptide. Ser309 (charge relay system) is an active-site residue.

This sequence belongs to the D-(-)-3-hydroxybutyrate oligomer hydrolase family.

Its subcellular location is the secreted. The catalysed reaction is (3R)-hydroxybutanoate dimer + H2O = 2 (R)-3-hydroxybutanoate + H(+). It participates in lipid metabolism; butanoate metabolism. Its function is as follows. Participates in the degradation of poly-3-hydroxybutyrate (PHB). It works downstream of poly(3-hydroxybutyrate) depolymerase, hydrolyzing D(-)-3-hydroxybutyrate oligomers of various length (3HB-oligomers) into 3HB-monomers. The polypeptide is D-(-)-3-hydroxybutyrate oligomer hydrolase (Albidiferax ferrireducens (strain ATCC BAA-621 / DSM 15236 / T118) (Rhodoferax ferrireducens)).